The chain runs to 41 residues: Large ribosomal subunit protein bL36 (41 aa).

The protein belongs to the bacterial ribosomal protein bL36 family.

The protein is Large ribosomal subunit protein bL36 of Orientia tsutsugamushi (strain Boryong) (Rickettsia tsutsugamushi).